A 281-amino-acid chain; its full sequence is ATP phosphoribosyltransferase (281 aa).

This sequence belongs to the ATP phosphoribosyltransferase family. Long subfamily. Requires Mg(2+) as cofactor.

The protein resides in the cytoplasm. It carries out the reaction 1-(5-phospho-beta-D-ribosyl)-ATP + diphosphate = 5-phospho-alpha-D-ribose 1-diphosphate + ATP. It participates in amino-acid biosynthesis; L-histidine biosynthesis; L-histidine from 5-phospho-alpha-D-ribose 1-diphosphate: step 1/9. Feedback inhibited by histidine. Functionally, catalyzes the condensation of ATP and 5-phosphoribose 1-diphosphate to form N'-(5'-phosphoribosyl)-ATP (PR-ATP). Has a crucial role in the pathway because the rate of histidine biosynthesis seems to be controlled primarily by regulation of HisG enzymatic activity. The sequence is that of ATP phosphoribosyltransferase from Natronomonas pharaonis (strain ATCC 35678 / DSM 2160 / CIP 103997 / JCM 8858 / NBRC 14720 / NCIMB 2260 / Gabara) (Halobacterium pharaonis).